The chain runs to 184 residues: Peptide deformylase (184 aa).

Residues Cys-98 and His-140 each coordinate Fe cation. The active site involves Glu-141. His-144 is a binding site for Fe cation.

It belongs to the polypeptide deformylase family. Fe(2+) serves as cofactor.

The enzyme catalyses N-terminal N-formyl-L-methionyl-[peptide] + H2O = N-terminal L-methionyl-[peptide] + formate. Removes the formyl group from the N-terminal Met of newly synthesized proteins. Requires at least a dipeptide for an efficient rate of reaction. N-terminal L-methionine is a prerequisite for activity but the enzyme has broad specificity at other positions. This Phocaeicola vulgatus (strain ATCC 8482 / DSM 1447 / JCM 5826 / CCUG 4940 / NBRC 14291 / NCTC 11154) (Bacteroides vulgatus) protein is Peptide deformylase.